The primary structure comprises 291 residues: uncharacterized protein (291 aa).

The interval 1–55 is disordered; the sequence is MRTHDIPRSPLVGHKKNAAPDGIGASRACCPARENEPFKKGSTNSRGGGVEWSRS. Helical transmembrane passes span 74 to 96 and 188 to 210; these read WWAV…PVHA and YYYL…RIRL.

To T.pallidum TP_0733.

The protein resides in the cell membrane. This is an uncharacterized protein from Treponema pallidum (strain Nichols).